Reading from the N-terminus, the 331-residue chain is Laforin (331 aa).

Residues 1-124 enclose the CBM20 domain; it reads MRFRFGVVVP…NNLVDGVYCL (124 aa). Ser-25 carries the post-translational modification Phosphoserine; by AMPK. Residues Trp-32, Lys-87, 103–107, Asp-197, Asp-235, and Arg-241 contribute to the substrate site; that span reads GPHHD. The Tyrosine-protein phosphatase domain maps to 156-323; the sequence is HYSRILPNIW…QEDFFQKFGK (168 aa). The Phosphocysteine intermediate role is filled by Cys-266. Positions 266–272 match the Glucan phosphatase signature motif CXAGXGR motif; that stretch reads CNAGVGR. Substrate-binding positions include 267-272 and Tyr-304; that span reads NAGVGR.

It belongs to the protein-tyrosine phosphatase family. In terms of assembly, homodimer. Interacts with itself. Interacts with PPP1R3B, PPP1R3C, PPP1R3D, HIRIP5, and EPM2AIP1. Binds glycogen and Lafora bodies. Interacts with NHLRC1/malin (via the NHL repeats). Forms a complex with NHLRC1/malin and HSP70. Interacts with PPP1R3D; in the presence of NHLC1/malin the interaction leads to ubiquitination and autophagic degradation of PPP1R3D. Interacts (via the phosphatase domain) with MAPT/Tau; the interaction dephosphorylates MAPT. Isoform 1 and isoform 2 interact to form a heterodimeric complex that lacks phosphatase activity (in vitro). Active phosphatase isoform 7 and isoform 1 interact with each other, but give rise to lower phosphatase activity than isoform 1 or isoform 7 by themselves (in vitro). Active phosphatase isoform 7 and inactive isoform 2 interact with each other, but give rise to lower phosphatase activity than isoform 7 by itself (in vitro). Interacts with PRDM8. In terms of processing, polyubiquitinated by NHLRC1/malin. Post-translationally, phosphorylation on Ser-25 by AMPK affects the phosphatase activity of the enzyme and its ability to homodimerize and interact with NHLRC1, PPP1R3C or PRKAA2. In terms of tissue distribution, expressed in heart, skeletal muscle, kidney, pancreas and brain. Isoform 4 is also expressed in the placenta.

It localises to the cytoplasm. It is found in the endoplasmic reticulum membrane. The protein resides in the cell membrane. Its subcellular location is the nucleus. It catalyses the reaction O-phospho-L-tyrosyl-[protein] + H2O = L-tyrosyl-[protein] + phosphate. It carries out the reaction O-phospho-L-seryl-[protein] + H2O = L-seryl-[protein] + phosphate. The enzyme catalyses O-phospho-L-threonyl-[protein] + H2O = L-threonyl-[protein] + phosphate. In terms of biological role, plays an important role in preventing glycogen hyperphosphorylation and the formation of insoluble aggregates, via its activity as glycogen phosphatase, and by promoting the ubiquitination of proteins involved in glycogen metabolism via its interaction with the E3 ubiquitin ligase NHLRC1/malin. Shows strong phosphatase activity towards complex carbohydrates in vitro, avoiding glycogen hyperphosphorylation which is associated with reduced branching and formation of insoluble aggregates. Dephosphorylates phosphotyrosine and synthetic substrates, such as para-nitrophenylphosphate (pNPP), and has low activity with phosphoserine and phosphothreonine substrates (in vitro). Has been shown to dephosphorylate MAPT. Forms a complex with NHLRC1/malin and HSP70, which suppresses the cellular toxicity of misfolded proteins by promoting their degradation through the ubiquitin-proteasome system (UPS). Acts as a scaffold protein to facilitate PPP1R3C/PTG ubiquitination by NHLRC1/malin. Also promotes proteasome-independent protein degradation through the macroautophagy pathway. Its function is as follows. Does not bind to glycogen. Lacks phosphatase activity and might function as a dominant-negative regulator for the phosphatase activity of isoform 1 and isoform 7. Functionally, has phosphatase activity (in vitro). This is Laforin (EPM2A) from Homo sapiens (Human).